A 759-amino-acid chain; its full sequence is Protein YdeP (759 aa).

C49 and C52 together coordinate [4Fe-4S] cluster.

The protein belongs to the prokaryotic molybdopterin-containing oxidoreductase family. It depends on [4Fe-4S] cluster as a cofactor. Mo-bis(molybdopterin guanine dinucleotide) is required as a cofactor.

Its function is as follows. Probably involved in acid resistance. The chain is Protein YdeP (ydeP) from Escherichia coli (strain K12).